The sequence spans 650 residues: 1-deoxy-D-xylulose-5-phosphate synthase (650 aa).

Residues H87 and 128-130 (GHS) contribute to the thiamine diphosphate site. Residue D159 coordinates Mg(2+). Thiamine diphosphate is bound by residues 160 to 161 (GS), N188, Y299, and E383. Residue N188 participates in Mg(2+) binding.

This sequence belongs to the transketolase family. DXPS subfamily. As to quaternary structure, homodimer. Requires Mg(2+) as cofactor. It depends on thiamine diphosphate as a cofactor.

The catalysed reaction is D-glyceraldehyde 3-phosphate + pyruvate + H(+) = 1-deoxy-D-xylulose 5-phosphate + CO2. It participates in metabolic intermediate biosynthesis; 1-deoxy-D-xylulose 5-phosphate biosynthesis; 1-deoxy-D-xylulose 5-phosphate from D-glyceraldehyde 3-phosphate and pyruvate: step 1/1. Catalyzes the acyloin condensation reaction between C atoms 2 and 3 of pyruvate and glyceraldehyde 3-phosphate to yield 1-deoxy-D-xylulose-5-phosphate (DXP). This is 1-deoxy-D-xylulose-5-phosphate synthase from Syntrophus aciditrophicus (strain SB).